The following is a 430-amino-acid chain: Protein DSE3 (430 aa).

Residue S395 is modified to Phosphoserine.

It localises to the bud neck. Functionally, may be involved in the establishment of the daughter fate. This Saccharomyces cerevisiae (strain ATCC 204508 / S288c) (Baker's yeast) protein is Protein DSE3 (DSE3).